The primary structure comprises 208 residues: Protein-L-isoaspartate O-methyltransferase (208 aa).

Serine 59 is a catalytic residue.

Belongs to the methyltransferase superfamily. L-isoaspartyl/D-aspartyl protein methyltransferase family.

The protein localises to the cytoplasm. It catalyses the reaction [protein]-L-isoaspartate + S-adenosyl-L-methionine = [protein]-L-isoaspartate alpha-methyl ester + S-adenosyl-L-homocysteine. Catalyzes the methyl esterification of L-isoaspartyl residues in peptides and proteins that result from spontaneous decomposition of normal L-aspartyl and L-asparaginyl residues. It plays a role in the repair and/or degradation of damaged proteins. The polypeptide is Protein-L-isoaspartate O-methyltransferase (Cronobacter sakazakii (strain ATCC BAA-894) (Enterobacter sakazakii)).